The sequence spans 172 residues: CD164 sialomucin-like 2 protein (172 aa).

An N-terminal signal peptide occupies residues 1-29 (MAAPGPRALRAALCGGCCCLLLCAQLVLA). Over 30 to 137 (GKGARGFGRG…PEDHSPGFDG (108 aa)) the chain is Extracellular. N-linked (GlcNAc...) asparagine glycans are attached at residues N69 and N101. The interval 108 to 132 (ASHHHSTEEPKPSTTGSPPIPEDHS) is disordered. The helical transmembrane segment at 138–158 (ASFIGGIVLVLSLQATAFFVL) threads the bilayer. The Cytoplasmic segment spans residues 159-172 (RFLKAKDSTYQTLI).

This sequence belongs to the CD164 family.

It is found in the membrane. The sequence is that of CD164 sialomucin-like 2 protein (Cd164l2) from Mus musculus (Mouse).